The chain runs to 207 residues: MARYTGPKAKLSRREGTDLFLKSARRSLADKCKLDSKPGQHGRTSGARTSDYGNQLREKQKVKRIYGVLERQFRRYFAEADRRKGNTGENLLQLLESRLDNVVYRMGFGSTRAEARQLVSHKAILVNGQTLNVPSAQIKSGDVVTIREQSKKQVRIAEALSLAEQSGFPTWVAVDSKKFEGTFKQVPDRADISGDINESLIVELYSR.

The interval 33-54 (KLDSKPGQHGRTSGARTSDYGN) is disordered. Positions 42-53 (GRTSGARTSDYG) are enriched in polar residues. An S4 RNA-binding domain is found at 97 to 160 (SRLDNVVYRM…KKQVRIAEAL (64 aa)).

It belongs to the universal ribosomal protein uS4 family. As to quaternary structure, part of the 30S ribosomal subunit. Contacts protein S5. The interaction surface between S4 and S5 is involved in control of translational fidelity.

Functionally, one of the primary rRNA binding proteins, it binds directly to 16S rRNA where it nucleates assembly of the body of the 30S subunit. Its function is as follows. With S5 and S12 plays an important role in translational accuracy. The protein is Small ribosomal subunit protein uS4 of Cupriavidus necator (strain ATCC 17699 / DSM 428 / KCTC 22496 / NCIMB 10442 / H16 / Stanier 337) (Ralstonia eutropha).